A 92-amino-acid polypeptide reads, in one-letter code: Large ribosomal subunit protein bL34m (92 aa).

Residues 1 to 46 constitute a mitochondrion transit peptide; it reads MAFLARCFGCQACRSVALLSGRYLQSRVWMGLPDSWPLLSLQQARG. At S71 the chain carries Phosphoserine.

It belongs to the bacterial ribosomal protein bL34 family. Component of the mitochondrial ribosome large subunit (39S) which comprises a 16S rRNA and about 50 distinct proteins.

Its subcellular location is the mitochondrion. The polypeptide is Large ribosomal subunit protein bL34m (Mrpl34) (Mus musculus (Mouse)).